The chain runs to 776 residues: Microtubule-associated protein tau (776 aa).

Residues 1 to 26 (MAEPRQEFEVMEDHAGTYGLGDRKDQ) are compositionally biased toward basic and acidic residues. The disordered stretch occupies residues 1–591 (MAEPRQEFEV…PVPMPDLKNV (591 aa)). A2 is subject to N-acetylalanine. Phosphotyrosine occurs at positions 18 and 29. A Glycyl lysine isopeptide (Lys-Gly) (interchain with G-Cter in ubiquitin) cross-link involves residue K44. Phosphoserine is present on residues S46 and S61. Polar residues predominate over residues 61–71 (SETSDAKSTPT). Residues T69, T71, and T111 each carry the phosphothreonine modification. 2 stretches are compositionally biased toward basic and acidic residues: residues 179–189 (EGGRHAPELLK) and 207–216 (GGKERPGSKE). Position 214 is a phosphoserine (S214). A compositionally biased stretch (acidic residues) spans 217 to 228 (EVDEDRDVDESS). Composition is skewed to basic and acidic residues over residues 293–303 (KGQDAHLEFTF) and 314–323 (EQAHSEEHLG). A compositionally biased stretch (low complexity) spans 324 to 340 (RAAFPGAPGEGPEARGP). 2 stretches are compositionally biased toward basic and acidic residues: residues 344–356 (EDTK…EPSE) and 381–393 (KSKD…DKKA). Residues 440 to 452 (KYVSSVTPRTGSS) show a composition bias toward polar residues. Over residues 455-466 (KEMKLKGADGKT) the composition is skewed to basic and acidic residues. Phosphothreonine is present on T470. Position 472 is an omega-N-methylarginine (R472). Position 480 is an N6,N6-dimethyllysine; alternate (K480). K480 carries the N6-acetyllysine; alternate modification. Residues T486, T492, and T498 each carry the phosphothreonine modification. 3 positions are modified to phosphoserine: S502, S526, and S530. Positions 517 to 528 (RSERGEPPKSGD) are enriched in basic and acidic residues. Residues 529-549 (RSGYSSPGSPGTPGSRSRTPS) are compositionally biased toward low complexity. Y532 bears the Phosphotyrosine mark. 3 positions are modified to phosphoserine: S533, S534, and S537. 2 positions are modified to phosphothreonine: T540 and T547. A Phosphoserine modification is found at S549. At T552 the chain carries Phosphothreonine. K560 is modified (N6-acetyllysine). T566 carries the phosphothreonine modification. 2 positions are modified to phosphoserine: S570 and S572. Tau/MAP repeat units lie at residues 579–609 (QTAP…GGGK), 610–640 (VQII…GGGS), 641–671 (VQIV…GGGQ), and 672–703 (VEVK…GGGN). A Glycyl lysine isopeptide (Lys-Gly) (interchain with G-Cter in ubiquitin) cross-link involves residue K589. At K594 the chain carries N6-acetyllysine; alternate. Position 594 is an N6-methyllysine; alternate (K594). K594 is covalently cross-linked (Glycyl lysine isopeptide (Lys-Gly) (interchain with G-Cter in ubiquitin); alternate). S597 bears the Phosphoserine mark. K602 participates in a covalent cross-link: Glycyl lysine isopeptide (Lys-Gly) (interchain with G-Cter in ubiquitin). Residue K616 is modified to N6-acetyllysine; alternate. A Glycyl lysine isopeptide (Lys-Gly) (interchain with G-Cter in ubiquitin); alternate cross-link involves residue K616. Residues S620 and S624 each carry the phosphoserine modification. K625 carries the N6-acetyllysine modification. Position 628 is a phosphoserine (S628). K633 carries the post-translational modification N6-acetyllysine; alternate. A Glycyl lysine isopeptide (Lys-Gly) (interchain with G-Cter in ubiquitin); alternate cross-link involves residue K633. The residue at position 640 (S640) is a Phosphoserine. The residue at position 646 (K646) is an N6,N6-dimethyllysine; alternate. An N6-acetyllysine; alternate mark is found at K646, K652, and K656. Residues K646, K652, and K656 each participate in a glycyl lysine isopeptide (Lys-Gly) (interchain with G-Cter in ubiquitin); alternate cross-link. S659 is modified (phosphoserine). 3 positions are modified to N6-acetyllysine; alternate: K666, K678, and K682. Glycyl lysine isopeptide (Lys-Gly) (interchain with G-Cter in ubiquitin); alternate cross-links involve residues K666, K678, and K682. At R684 the chain carries Omega-N-methylarginine. S687 is modified (phosphoserine). Residue K688 forms a Glycyl lysine isopeptide (Lys-Gly) (interchain with G-Cter in ubiquitin) linkage. S691 is subject to Phosphoserine. The residue at position 704 (K704) is an N6-acetyllysine; alternate. K704 is covalently cross-linked (Glycyl lysine isopeptide (Lys-Gly) (interchain with G-Cter in ubiquitin); alternate). A Glycyl lysine isopeptide (Lys-Gly) (interchain with G-Cter in ubiquitin) cross-link involves residue K710. K720 carries the N6-acetyllysine; alternate modification. A Glycyl lysine isopeptide (Lys-Gly) (interchain with G-Cter in ubiquitin); alternate cross-link involves residue K720. Y729 carries the phosphotyrosine modification. 2 positions are modified to phosphoserine: S731 and S735. The segment at 733–752 (VVSGDTSPRHLSNVSSTGSI) is disordered. Residues 736 to 751 (GDTSPRHLSNVSSTGS) are compositionally biased toward polar residues. At T738 the chain carries Phosphothreonine. Residues S739, S744, S751, and S757 each carry the phosphoserine modification. Residue T762 is modified to Phosphothreonine.

Interacts with MARK1, MARK2, MARK3 and MARK4. Interacts with SQSTM1 when polyubiquitinated. Interacts with PSMC2 through SQSTM1. Interacts with FKBP4. Binds to CSNK1D. Interacts with SGK1. Interacts with EPM2A; the interaction dephosphorylates MAPT at Ser-396. Interacts with PIN1. Interacts with LRRK2. Interacts with LRP1, leading to endocytosis; this interaction is reduced in the presence of LRPAP1/RAP. Polyubiquitinated. Requires functional TRAF6 and may provoke SQSTM1-dependent degradation by the proteasome. In terms of processing, phosphorylation at various serine and threonine residues in S-P or T-P motifs by proline-directed protein kinases (PDPK1, CDK1, CDK5, GSK3, MAPK) (a few sites per protein in interphase, more in mitosis), and at serine residues in K-X-G-S motifs by MAP/microtubule affinity-regulating kinase (MARK1, MARK2, MARK3 or MARK4), causing detachment from microtubules, and their disassembly. Phosphorylation at Ser-597 by BRSK1 and BRSK2 in neurons affects ability to bind microtubules and plays a role in neuron polarization. Phosphorylated by PHK. Dephosphorylation at several serine and threonine residues by the serine/threonine phosphatase PPP5C. Phosphorylation at Ser-214 by SGK1 mediates microtubule depolymerization and neurite formation in hippocampal neurons.

The protein localises to the cytoplasm. It is found in the cytosol. The protein resides in the cell membrane. It localises to the cytoskeleton. Its subcellular location is the cell projection. The protein localises to the axon. It is found in the dendrite. Its function is as follows. Promotes microtubule assembly and stability, and might be involved in the establishment and maintenance of neuronal polarity. The C-terminus binds axonal microtubules while the N-terminus binds neural plasma membrane components, suggesting that tau functions as a linker protein between both. Axonal polarity is predetermined by tau localization (in the neuronal cell) in the domain of the cell body defined by the centrosome. The short isoforms allow plasticity of the cytoskeleton whereas the longer isoforms may preferentially play a role in its stabilization. The sequence is that of Microtubule-associated protein tau (MAPT) from Pan troglodytes (Chimpanzee).